A 206-amino-acid polypeptide reads, in one-letter code: Inosine triphosphate pyrophosphatase (206 aa).

21-26 (TGNAKK) is a binding site for ITP. Mg(2+) is bound at residue glutamate 49. ITP-binding positions include lysine 61, 77 to 78 (DT), lysine 94, 153 to 156 (FGWD), lysine 176, and 181 to 182 (HR).

This sequence belongs to the HAM1 NTPase family. Homodimer. Requires Mg(2+) as cofactor. The cofactor is Mn(2+).

The protein resides in the cytoplasm. The catalysed reaction is ITP + H2O = IMP + diphosphate + H(+). It carries out the reaction dITP + H2O = dIMP + diphosphate + H(+). It catalyses the reaction XTP + H2O = XMP + diphosphate + H(+). Its function is as follows. Pyrophosphatase that hydrolyzes non-canonical purine nucleotides such as inosine triphosphate (ITP), deoxyinosine triphosphate (dITP) or xanthosine 5'-triphosphate (XTP) to their respective monophosphate derivatives. The enzyme does not distinguish between the deoxy- and ribose forms. Probably excludes non-canonical purines from RNA and DNA precursor pools, thus preventing their incorporation into RNA and DNA and avoiding chromosomal lesions. This chain is Inosine triphosphate pyrophosphatase, found in Vitis vinifera (Grape).